The following is a 341-amino-acid chain: UDP-glucose 4-epimerase (341 aa).

It belongs to the polysaccharide synthase family.

It catalyses the reaction UDP-alpha-D-glucose = UDP-alpha-D-galactose. In terms of biological role, epimerizes UDP-galactose to UDP-glucose. The protein is UDP-glucose 4-epimerase (capD) of Rickettsia conorii (strain ATCC VR-613 / Malish 7).